Reading from the N-terminus, the 78-residue chain is Protein DsvD (78 aa).

This sequence to A.fulgidus DsrD.

May play an essential role in dissimilatory sulfite reduction. The sequence is that of Protein DsvD (dsvD) from Nitratidesulfovibrio vulgaris (strain ATCC 29579 / DSM 644 / CCUG 34227 / NCIMB 8303 / VKM B-1760 / Hildenborough) (Desulfovibrio vulgaris).